The following is a 175-amino-acid chain: Acetyl-CoA decarbonylase/synthase complex subunit epsilon 2 (175 aa).

This sequence belongs to the CdhB family. In terms of assembly, heterotetramer of two alpha and two epsilon subunits. The ACDS complex is made up of alpha, epsilon, beta, gamma and delta subunits with a probable stoichiometry of (alpha(2)epsilon(2))(4)-beta(8)-(gamma(1)delta(1))(8).

In terms of biological role, part of a complex that catalyzes the reversible cleavage of acetyl-CoA, allowing autotrophic growth from CO(2). The alpha-epsilon subcomponent functions as a carbon monoxide dehydrogenase. The precise role of the epsilon subunit is unclear; it may have a stabilizing role within the alpha(2)epsilon(2) component and/or be involved in electron transfer to FAD during a potential FAD-mediated CO oxidation. The chain is Acetyl-CoA decarbonylase/synthase complex subunit epsilon 2 (cdhB2) from Archaeoglobus fulgidus (strain ATCC 49558 / DSM 4304 / JCM 9628 / NBRC 100126 / VC-16).